We begin with the raw amino-acid sequence, 117 residues long: Immunoglobulin kappa variable 1-5 (117 aa).

A signal peptide spans 1–22; the sequence is MDMRVPAQLLGLLLLWLPGAKC. The segment at 23–45 is framework-1; it reads DIQMTQSPSTLSASVGDRVTITC. Residues 24 to 117 enclose the Ig-like domain; sequence IQMTQSPSTL…YYCQQYNSYS (94 aa). Cys45 and Cys110 are disulfide-bonded. Residues 46–56 form a complementarity-determining-1 region; that stretch reads RASQSISSWLA. Positions 57–71 are framework-2; that stretch reads WYQQKPGKAPKLLIY. The tract at residues 72–78 is complementarity-determining-2; sequence KASSLES. A framework-3 region spans residues 79–110; that stretch reads GVPSRFSGSGSGTEFTLTISSLQPDDFATYYC. Positions 111–117 are complementarity-determining-3; it reads QQYNSYS.

In terms of assembly, immunoglobulins are composed of two identical heavy chains and two identical light chains; disulfide-linked.

It localises to the secreted. Its subcellular location is the cell membrane. Functionally, v region of the variable domain of immunoglobulin light chains that participates in the antigen recognition. Immunoglobulins, also known as antibodies, are membrane-bound or secreted glycoproteins produced by B lymphocytes. In the recognition phase of humoral immunity, the membrane-bound immunoglobulins serve as receptors which, upon binding of a specific antigen, trigger the clonal expansion and differentiation of B lymphocytes into immunoglobulins-secreting plasma cells. Secreted immunoglobulins mediate the effector phase of humoral immunity, which results in the elimination of bound antigens. The antigen binding site is formed by the variable domain of one heavy chain, together with that of its associated light chain. Thus, each immunoglobulin has two antigen binding sites with remarkable affinity for a particular antigen. The variable domains are assembled by a process called V-(D)-J rearrangement and can then be subjected to somatic hypermutations which, after exposure to antigen and selection, allow affinity maturation for a particular antigen. This chain is Immunoglobulin kappa variable 1-5, found in Homo sapiens (Human).